Reading from the N-terminus, the 362-residue chain is sn-glycerol-3-phosphate import ATP-binding protein UgpC (362 aa).

The region spanning 4–235 (LKLQAVTKSY…PATLFVASFI (232 aa)) is the ABC transporter domain. 37–44 (GPSGCGKS) serves as a coordination point for ATP.

This sequence belongs to the ABC transporter superfamily. sn-glycerol-3-phosphate importer (TC 3.A.1.1.3) family. The complex is composed of two ATP-binding proteins (UgpC), two transmembrane proteins (UgpA and UgpE) and a solute-binding protein (UgpB).

It is found in the cell inner membrane. It catalyses the reaction sn-glycerol 3-phosphate(out) + ATP + H2O = sn-glycerol 3-phosphate(in) + ADP + phosphate + H(+). Its function is as follows. Part of the ABC transporter complex UgpBAEC involved in sn-glycerol-3-phosphate (G3P) import. Responsible for energy coupling to the transport system. This Yersinia enterocolitica serotype O:8 / biotype 1B (strain NCTC 13174 / 8081) protein is sn-glycerol-3-phosphate import ATP-binding protein UgpC.